The following is a 306-amino-acid chain: Probable cobalamin biosynthesis protein CobD (306 aa).

5 helical membrane passes run 54-74 (LFGFLNVILVLAIVFFMTYEI), 88-108 (ISIYSIILSFSIGHKSLIEFS), 155-175 (ITDSIIAPLIYAAIFGLPGAF), 215-235 (IAGMLLIISAPFYGGNIKSAI), and 286-306 (SLKAVDYSVLLFLIIYTVLLM).

It belongs to the CobD/CbiB family.

It localises to the cell membrane. The protein operates within cofactor biosynthesis; adenosylcobalamin biosynthesis. In terms of biological role, converts cobyric acid to cobinamide by the addition of aminopropanol on the F carboxylic group. The chain is Probable cobalamin biosynthesis protein CobD from Methanococcus maripaludis (strain C7 / ATCC BAA-1331).